A 143-amino-acid chain; its full sequence is Nucleoside diphosphate kinase (143 aa).

ATP is bound by residues Lys11, Phe59, Arg87, Thr93, Arg104, and Asn114. The Pros-phosphohistidine intermediate role is filled by His117.

This sequence belongs to the NDK family. In terms of assembly, homotetramer. The cofactor is Mg(2+).

The protein resides in the cytoplasm. The enzyme catalyses a 2'-deoxyribonucleoside 5'-diphosphate + ATP = a 2'-deoxyribonucleoside 5'-triphosphate + ADP. It catalyses the reaction a ribonucleoside 5'-diphosphate + ATP = a ribonucleoside 5'-triphosphate + ADP. In terms of biological role, major role in the synthesis of nucleoside triphosphates other than ATP. The ATP gamma phosphate is transferred to the NDP beta phosphate via a ping-pong mechanism, using a phosphorylated active-site intermediate. This is Nucleoside diphosphate kinase from Azotobacter vinelandii (strain DJ / ATCC BAA-1303).